A 259-amino-acid polypeptide reads, in one-letter code: Proteasome subunit alpha (259 aa).

Low complexity predominate over residues 233 to 243 (PAAPAAASESA). Residues 233–259 (PAAPAAASESAPEPKPDTETKPADPQD) are disordered. Basic and acidic residues predominate over residues 244–259 (PEPKPDTETKPADPQD).

The protein belongs to the peptidase T1A family. In terms of assembly, the 20S proteasome core is composed of 14 alpha and 14 beta subunits that assemble into four stacked heptameric rings, resulting in a barrel-shaped structure. The two inner rings, each composed of seven catalytic beta subunits, are sandwiched by two outer rings, each composed of seven alpha subunits. The catalytic chamber with the active sites is on the inside of the barrel. Has a gated structure, the ends of the cylinder being occluded by the N-termini of the alpha-subunits. Is capped by the proteasome-associated ATPase, ARC.

Its subcellular location is the cytoplasm. Its pathway is protein degradation; proteasomal Pup-dependent pathway. The formation of the proteasomal ATPase ARC-20S proteasome complex, likely via the docking of the C-termini of ARC into the intersubunit pockets in the alpha-rings, may trigger opening of the gate for substrate entry. Interconversion between the open-gate and close-gate conformations leads to a dynamic regulation of the 20S proteasome proteolysis activity. Component of the proteasome core, a large protease complex with broad specificity involved in protein degradation. This Rhodococcus opacus (strain B4) protein is Proteasome subunit alpha.